Reading from the N-terminus, the 418-residue chain is Putative heat shock protein HSP 90-alpha A4 (418 aa).

ATP-binding residues include Asp-33, Lys-52, Phe-78, and Arg-204. Disordered stretches follow at residues 255-289 (EDLE…TSAK) and 383-418 (GLGT…RMEK). A compositionally biased stretch (basic and acidic residues) spans 265-274 (EKKKQEEGKQ).

It belongs to the heat shock protein 90 family. In terms of assembly, homodimer.

It is found in the cytoplasm. Putative molecular chaperone that may promote the maturation, structural maintenance and proper regulation of specific target proteins. The protein is Putative heat shock protein HSP 90-alpha A4 (HSP90AA4P) of Homo sapiens (Human).